The following is a 338-amino-acid chain: 4-hydroxy-2-oxovalerate aldolase (338 aa).

Residues 6–256 (IHIVDTTLRD…RTGVDFYKVM (251 aa)) enclose the Pyruvate carboxyltransferase domain. A substrate-binding site is contributed by 14–15 (RD). Position 15 (Asp15) interacts with Mn(2+). The active-site Proton acceptor is the His18. The substrate site is built by Ser168 and His195. Mn(2+) contacts are provided by His195 and His197. Tyr286 is a substrate binding site.

Belongs to the 4-hydroxy-2-oxovalerate aldolase family.

It catalyses the reaction (S)-4-hydroxy-2-oxopentanoate = acetaldehyde + pyruvate. This chain is 4-hydroxy-2-oxovalerate aldolase, found in Moorella thermoacetica (strain ATCC 39073 / JCM 9320).